The following is a 149-amino-acid chain: Calmodulin (149 aa).

Alanine 2 carries the N-acetylalanine modification. 4 consecutive EF-hand domains span residues 8-43 (DQIS…LGQN), 44-79 (PTEA…KMKD), 81-116 (DSEE…LGEK), and 117-149 (LTDE…MMAK). 14 residues coordinate Ca(2+): aspartate 21, aspartate 23, aspartate 25, cysteine 27, glutamate 32, aspartate 57, aspartate 59, asparagine 61, threonine 63, glutamate 68, aspartate 94, aspartate 96, asparagine 98, and glutamate 105. An N6,N6,N6-trimethyllysine modification is found at lysine 116. The Ca(2+) site is built by aspartate 130, aspartate 132, aspartate 134, glutamine 136, and glutamate 141.

This sequence belongs to the calmodulin family.

In terms of biological role, calmodulin mediates the control of a large number of enzymes, ion channels and other proteins by Ca(2+). Among the enzymes to be stimulated by the calmodulin-Ca(2+) complex are a number of protein kinases and phosphatases. This chain is Calmodulin (CCM1), found in Capsicum annuum (Capsicum pepper).